A 215-amino-acid chain; its full sequence is LexA repressor (215 aa).

The segment at residues 28–48 (RAEIAAELGFSSPNAAEEHLR) is a DNA-binding region (H-T-H motif). Residues Ser133 and Lys170 each act as for autocatalytic cleavage activity in the active site.

Belongs to the peptidase S24 family. As to quaternary structure, homodimer.

It carries out the reaction Hydrolysis of Ala-|-Gly bond in repressor LexA.. Represses a number of genes involved in the response to DNA damage (SOS response), including recA and lexA. In the presence of single-stranded DNA, RecA interacts with LexA causing an autocatalytic cleavage which disrupts the DNA-binding part of LexA, leading to derepression of the SOS regulon and eventually DNA repair. This is LexA repressor from Burkholderia ambifaria (strain MC40-6).